A 919-amino-acid polypeptide reads, in one-letter code: Translocase of chloroplast 101, chloroplastic (919 aa).

2 disordered regions span residues 20–47 (SASR…VIEG) and 64–211 (VDDE…NETR). The segment covering 73-88 (SENKAVVETEKVESKP) has biased composition (basic and acidic residues). Residues 96 to 128 (FAEEDGDSDADAEDEDDEDDEDDDEDDDDEDDK) show a composition bias toward acidic residues. The span at 182–207 (QRPNGAPSTQLTATTEENANSDTAEG) shows a compositional bias: polar residues. In terms of domain architecture, AIG1-type G spans 284 to 513 (DFACTILVLG…KLQETATPGR (230 aa)). The segment at 293-300 (GKTGVGKS) is G1. Residue 296–301 (GVGKSA) participates in GTP binding. Mg(2+) is bound at residue serine 300. Positions 319–323 (PSTNK) are G2. Residues 340–343 (DTPG) form a G3 region. Residues 412–415 (THAS) are G4. Residues histidine 413 and 461–462 (EN) contribute to the GTP site. The interval 461-463 (ENH) is G5. Disordered regions lie at residues 540–585 (LPDE…LTKE) and 611–650 (RRRK…PMPD). Residues 543–567 (EQLDESDESDDDEEEEDSEADDYDE) are compositionally biased toward acidic residues. A compositionally biased stretch (basic and acidic residues) spans 574 to 585 (LSKEELEELTKE). A compositionally biased stretch (acidic residues) spans 629-638 (AQPDEADDEA). A compositionally biased stretch (low complexity) spans 641 to 650 (PAAVPVPMPD). Residues 893–914 (MVLIGIVPILRSLINCRFGFGG) traverse the membrane as a helical segment.

Belongs to the TRAFAC class TrmE-Era-EngA-EngB-Septin-like GTPase superfamily. AIG1/Toc34/Toc159-like paraseptin GTPase family. TOC159 subfamily. As to quaternary structure, part of the TOC core complex. The cofactor is Mg(2+).

It is found in the plastid. Its subcellular location is the chloroplast outer membrane. Its function is as follows. GTPase involved in protein precursor import into chloroplasts. Seems to recognize chloroplast-destined precursor proteins and regulate their presentation to the translocation channel through GTP hydrolysis. Probably specialized in the import of nuclear encoded non-photosynthetic preproteins from the cytoplasm to the chloroplast. The sequence is that of Translocase of chloroplast 101, chloroplastic from Physcomitrium patens (Spreading-leaved earth moss).